We begin with the raw amino-acid sequence, 81 residues long: Protein L83L (81 aa).

Positions 1-28 (MDTSLKNNDGALDADNKNYQDYKDEPDK) are disordered. The segment covering 14–28 (ADNKNYQDYKDEPDK) has biased composition (basic and acidic residues).

Belongs to the asfivirus L83L family. Interacts with host IL1B.

Its subcellular location is the host cytoplasm. Its function is as follows. May subvert the host innate immune response by interacting with host IL1B and interfering with its function. The protein is Protein L83L of African swine fever virus (isolate Tick/South Africa/Pretoriuskop Pr4/1996) (ASFV).